A 341-amino-acid polypeptide reads, in one-letter code: uncharacterized protein (341 aa).

3 helical membrane passes run 6 to 26 (IIAGLLLLTAGMIDFLWTTLW), 63 to 83 (LLLCLTLVIWISLFWSGWVLI), and 137 to 157 (AQGLLTITFSVTYLISVLSAV).

The protein resides in the cell membrane. This is an uncharacterized protein from Bacillus subtilis (strain 168).